A 330-amino-acid polypeptide reads, in one-letter code: ADP-L-glycero-D-manno-heptose-6-epimerase (330 aa).

NADP(+)-binding positions include 11–12 (FI), 32–33 (DN), Lys-39, Lys-54, 75–79 (EGACS), and Asn-92. Tyr-139 serves as the catalytic Proton acceptor. Lys-143 contacts NADP(+). Residue Asn-168 participates in substrate binding. NADP(+) is bound by residues Val-169 and Lys-177. Lys-177 serves as the catalytic Proton acceptor. Residues Arg-179, His-186, 200–203 (FGEY), Arg-213, and Tyr-292 contribute to the substrate site.

This sequence belongs to the NAD(P)-dependent epimerase/dehydratase family. HldD subfamily. As to quaternary structure, homopentamer. It depends on NADP(+) as a cofactor.

The enzyme catalyses ADP-D-glycero-beta-D-manno-heptose = ADP-L-glycero-beta-D-manno-heptose. Its pathway is nucleotide-sugar biosynthesis; ADP-L-glycero-beta-D-manno-heptose biosynthesis; ADP-L-glycero-beta-D-manno-heptose from D-glycero-beta-D-manno-heptose 7-phosphate: step 4/4. Functionally, catalyzes the interconversion between ADP-D-glycero-beta-D-manno-heptose and ADP-L-glycero-beta-D-manno-heptose via an epimerization at carbon 6 of the heptose. The polypeptide is ADP-L-glycero-D-manno-heptose-6-epimerase (Burkholderia pseudomallei (strain K96243)).